The primary structure comprises 258 residues: Alcohol dehydrogenase 2 (258 aa).

Position 9–33 (9–33 (IFVGGLGFIGYEACKQLMAKNMASF)) interacts with NAD(+). Residue Ser137 participates in substrate binding. The active-site Proton acceptor is Tyr150.

It belongs to the short-chain dehydrogenases/reductases (SDR) family. In terms of assembly, homodimer.

The enzyme catalyses a primary alcohol + NAD(+) = an aldehyde + NADH + H(+). It carries out the reaction a secondary alcohol + NAD(+) = a ketone + NADH + H(+). In Ceratitis capitata (Mediterranean fruit fly), this protein is Alcohol dehydrogenase 2 (ADH2).